A 558-amino-acid chain; its full sequence is Formate--tetrahydrofolate ligase (558 aa).

66–73 (TPAGEGKT) is an ATP binding site.

This sequence belongs to the formate--tetrahydrofolate ligase family.

The catalysed reaction is (6S)-5,6,7,8-tetrahydrofolate + formate + ATP = (6R)-10-formyltetrahydrofolate + ADP + phosphate. It participates in one-carbon metabolism; tetrahydrofolate interconversion. In Clostridioides difficile (strain 630) (Peptoclostridium difficile), this protein is Formate--tetrahydrofolate ligase.